The sequence spans 189 residues: Casparian strip membrane protein 2 (189 aa).

The segment at 1 to 21 (MKVSTIESGEISKGASSPRKG) is disordered. Residues 1-25 (MKVSTIESGEISKGASSPRKGMKRG) lie on the Cytoplasmic side of the membrane. Residues 26 to 46 (LSIMDFILRIFAAMSTLGSAL) form a helical membrane-spanning segment. Over 47 to 73 (SMGTAKQTMPFATRFVRFKVSFHDLPT) the chain is Extracellular. Residues 74–94 (FLFFVTANSIVCGYLALSLVL) traverse the membrane as a helical segment. Over 95 to 108 (SFFHIVRTISVKSR) the chain is Cytoplasmic. A helical membrane pass occupies residues 109-129 (ILLVFLDTVMFGLLTSGASAA). The Extracellular segment spans residues 130–163 (AAIVYVAHYGNPSANWFPFCQQYNSFCGRISGSL). Residues 164 to 184 (VGSFIAVVIFMILILMSGISI) traverse the membrane as a helical segment. Residues 185–189 (SKSKH) lie on the Cytoplasmic side of the membrane.

This sequence belongs to the Casparian strip membrane proteins (CASP) family. As to quaternary structure, homodimer and heterodimers.

The protein resides in the cell membrane. In terms of biological role, regulates membrane-cell wall junctions and localized cell wall deposition. Required for establishment of the Casparian strip membrane domain (CSD) and the subsequent formation of Casparian strips, a cell wall modification of the root endodermis that determines an apoplastic barrier between the intraorganismal apoplasm and the extraorganismal apoplasm and prevents lateral diffusion. In Medicago truncatula (Barrel medic), this protein is Casparian strip membrane protein 2.